An 86-amino-acid polypeptide reads, in one-letter code: uncharacterized protein (86 aa).

This sequence to M.jannaschii MJ1173.

This is an uncharacterized protein from Methanosarcina mazei (strain ATCC BAA-159 / DSM 3647 / Goe1 / Go1 / JCM 11833 / OCM 88) (Methanosarcina frisia).